The sequence spans 243 residues: Ribonuclease PH (243 aa).

Phosphate contacts are provided by residues Arg-91 and 129–131 (GTR).

Belongs to the RNase PH family. In terms of assembly, homohexameric ring arranged as a trimer of dimers.

The enzyme catalyses tRNA(n+1) + phosphate = tRNA(n) + a ribonucleoside 5'-diphosphate. In terms of biological role, phosphorolytic 3'-5' exoribonuclease that plays an important role in tRNA 3'-end maturation. Removes nucleotide residues following the 3'-CCA terminus of tRNAs; can also add nucleotides to the ends of RNA molecules by using nucleoside diphosphates as substrates, but this may not be physiologically important. Probably plays a role in initiation of 16S rRNA degradation (leading to ribosome degradation) during starvation. This is Ribonuclease PH from Burkholderia lata (strain ATCC 17760 / DSM 23089 / LMG 22485 / NCIMB 9086 / R18194 / 383).